The sequence spans 349 residues: Small ribosomal subunit biogenesis GTPase RsgA (349 aa).

The segment at 1-38 (MSKNKLSKGQERRVQANHQRRLKRTDNKPELDDSQLGE) is disordered. One can recognise a CP-type G domain in the interval 102-272 (TSVLNRPDIY…VIDSPGVREF (171 aa)). Residues 158–161 (NKID) and 212–220 (GQSGVGKSS) each bind GTP. The Zn(2+) site is built by C296, C301, H303, and C309.

This sequence belongs to the TRAFAC class YlqF/YawG GTPase family. RsgA subfamily. As to quaternary structure, monomer. Associates with 30S ribosomal subunit, binds 16S rRNA. Zn(2+) is required as a cofactor.

The protein localises to the cytoplasm. Functionally, one of several proteins that assist in the late maturation steps of the functional core of the 30S ribosomal subunit. Helps release RbfA from mature subunits. May play a role in the assembly of ribosomal proteins into the subunit. Circularly permuted GTPase that catalyzes slow GTP hydrolysis, GTPase activity is stimulated by the 30S ribosomal subunit. This Serratia proteamaculans (strain 568) protein is Small ribosomal subunit biogenesis GTPase RsgA.